The sequence spans 285 residues: Acrosomal protein SP-10 (285 aa).

A signal peptide spans 1-21; the sequence is MNMFLLLMSLYLLGSARGTSG. The tract at residues 64–200 is disordered; sequence TLSEHGSSEH…GEQPSGAPIS (137 aa). 19 tandem repeats follow at residues 66-70, 71-75, 85-89, 91-95, 110-114, 115-119, 120-124, 125-129, 130-134, 135-139, 145-149, 150-154, 155-159, 160-164, 165-169, 170-174, 175-179, 180-184, and 190-194. A 3 X 5 AA repeats of S-E-H-[GA]-A region spans residues 66–95; sequence SEHGSSEHGSREHTVAEHTPGEHAESEHAS. Over residues 69–95 the composition is skewed to basic and acidic residues; it reads GSSEHGSREHTVAEHTPGEHAESEHAS. The 7 X 5 AA repeats of S-G-E-H-[AL] stretch occupies residues 85-184; it reads PGEHAESEHA…SGEQSLGEHA (100 aa). The 9 X 5 AA repeats of [SV]-G-E-Q-[PSA] stretch occupies residues 110–194; that stretch reads VGEQPSGEQP…LSEKPSGEQP (85 aa). An N-linked (GlcNAc...) asparagine glycan is attached at N278.

As to expression, testis.

The protein resides in the cytoplasmic vesicle. It localises to the secretory vesicle. The protein localises to the acrosome. This is Acrosomal protein SP-10 (ACRV1) from Papio hamadryas (Hamadryas baboon).